The chain runs to 876 residues: Probable inactive ATP-dependent zinc metalloprotease FTSHI 2, chloroplastic (876 aa).

The segment at 1 to 20 (MACRFPLHSSSPSQFLSPEN) is disordered. A chloroplast-targeting transit peptide spans 1 to 32 (MACRFPLHSSSPSQFLSPENRQRLPRNYPSIS). Polar residues predominate over residues 8–19 (HSSSPSQFLSPE). A helical membrane pass occupies residues 59–79 (LLAIPITLTIISASLAKPSFA). The interval 256–276 (TMKAQKKQQERKKRKAVRKKK) is disordered. The segment covering 258 to 275 (KAQKKQQERKKRKAVRKK) has biased composition (basic residues). The chain crosses the membrane as a helical span at residues 304 to 324 (VATALGLVFFYIFYRVVVLNY). Residues 350 to 370 (ELEREMEGIEEEDEEVEEGTG) form a disordered region. The segment covering 357-368 (GIEEEDEEVEEG) has biased composition (acidic residues). 450 to 457 (GPPGVGKT) contributes to the ATP binding site.

This sequence in the N-terminal section; belongs to the AAA ATPase family. In the C-terminal section; belongs to the peptidase M41 family. Homooligomer. Interacts with FtsHi4.

Its subcellular location is the plastid. It localises to the chloroplast membrane. Required for plastid development during embryogenesis. Might be involved in chaperone functions or play a structural role in the thylakoid FtsH complex. In Arabidopsis thaliana (Mouse-ear cress), this protein is Probable inactive ATP-dependent zinc metalloprotease FTSHI 2, chloroplastic.